Consider the following 165-residue polypeptide: Phosphopantetheine adenylyltransferase (165 aa).

S9 is a binding site for substrate. ATP contacts are provided by residues 9 to 10 (SF) and H17. The substrate site is built by K41, I75, and R89. ATP contacts are provided by residues 90 to 92 (GVR), E100, and 125 to 131 (YLFVRSD).

This sequence belongs to the bacterial CoaD family. Homohexamer. It depends on Mg(2+) as a cofactor.

Its subcellular location is the cytoplasm. It carries out the reaction (R)-4'-phosphopantetheine + ATP + H(+) = 3'-dephospho-CoA + diphosphate. It functions in the pathway cofactor biosynthesis; coenzyme A biosynthesis; CoA from (R)-pantothenate: step 4/5. Reversibly transfers an adenylyl group from ATP to 4'-phosphopantetheine, yielding dephospho-CoA (dPCoA) and pyrophosphate. This is Phosphopantetheine adenylyltransferase from Borrelia hermsii (strain HS1 / DAH).